The chain runs to 229 residues: Transcriptional regulatory protein YxdJ (229 aa).

The 114-residue stretch at 3 to 116 (KIMIVEDSED…IVLAKIKSQI (114 aa)) folds into the Response regulatory domain. Aspartate 52 carries the 4-aspartylphosphate modification. Residues 129–227 (EKVVEYAGVQ…VRGEGYQLRA (99 aa)) constitute a DNA-binding region (ompR/PhoB-type).

In terms of processing, phosphorylated by YxdK.

The protein localises to the cytoplasm. Its function is as follows. Probable member of the two-component regulatory system YxdK/YxdJ. Positively regulates the expression of the yxdLMyxeA operon by direct interaction with its promoter region. Could also indirectly regulate the expression of the dlt operon. In Bacillus subtilis (strain 168), this protein is Transcriptional regulatory protein YxdJ (yxdJ).